The primary structure comprises 461 residues: Carboxypeptidase Rv3627c (461 aa).

The signal sequence occupies residues 1–28; sequence MGPTRWRKSTHVVVGAAVLAFVAVVVAA. Serine 114 (acyl-ester intermediate) is an active-site residue. Lysine 117 acts as the Proton acceptor in catalysis. Serine 295 is a catalytic residue.

The protein belongs to the peptidase S13 family.

Its function is as follows. Carboxypeptidase that cleaves terminal D-alanine from peptidoglycan in the mycobacterial cell wall. May cleave L-Lys-D-Ala and/or D-Ala-D-Ala peptide bonds. Exerts important effects on mycobacterial cell morphology and cell division. This chain is Carboxypeptidase Rv3627c, found in Mycobacterium tuberculosis (strain ATCC 25618 / H37Rv).